Reading from the N-terminus, the 456-residue chain is tRNA-2-methylthio-N(6)-dimethylallyladenosine synthase (456 aa).

The region spanning 18 to 134 (KKLFIETYGC…LPDLVASVEA (117 aa)) is the MTTase N-terminal domain. 6 residues coordinate [4Fe-4S] cluster: cysteine 27, cysteine 63, cysteine 98, cysteine 172, cysteine 176, and cysteine 179. Residues 158 to 390 (CGNHISGFVS…IELQNRLSAE (233 aa)) enclose the Radical SAM core domain. Positions 393–456 (ARDVGKTFEV…SATLKGEEVF (64 aa)) constitute a TRAM domain.

Belongs to the methylthiotransferase family. MiaB subfamily. In terms of assembly, monomer. Requires [4Fe-4S] cluster as cofactor.

It localises to the cytoplasm. The catalysed reaction is N(6)-dimethylallyladenosine(37) in tRNA + (sulfur carrier)-SH + AH2 + 2 S-adenosyl-L-methionine = 2-methylsulfanyl-N(6)-dimethylallyladenosine(37) in tRNA + (sulfur carrier)-H + 5'-deoxyadenosine + L-methionine + A + S-adenosyl-L-homocysteine + 2 H(+). Its function is as follows. Catalyzes the methylthiolation of N6-(dimethylallyl)adenosine (i(6)A), leading to the formation of 2-methylthio-N6-(dimethylallyl)adenosine (ms(2)i(6)A) at position 37 in tRNAs that read codons beginning with uridine. This chain is tRNA-2-methylthio-N(6)-dimethylallyladenosine synthase, found in Phocaeicola vulgatus (strain ATCC 8482 / DSM 1447 / JCM 5826 / CCUG 4940 / NBRC 14291 / NCTC 11154) (Bacteroides vulgatus).